The primary structure comprises 405 residues: Phosphatidylinositol 5-phosphate 4-kinase type-2 alpha (405 aa).

Alanine 2 is subject to N-acetylalanine. Threonine 3 carries the post-translational modification Phosphothreonine. Serine 14 carries the phosphoserine modification. Residues 33-405 enclose the PIPK domain; the sequence is ASDPLLSVLM…RFLDFIGHIL (373 aa). The tract at residues 59–65 is required for interaction with PIP5K1A; the sequence is VMLMPDD. An N6-acetyllysine mark is found at lysine 89 and lysine 145. The tract at residues 288–328 is disordered; that stretch reads QEEVECEENDGEEEGESDSTHPIGTPPDSPGNTLNSSPPLA. The span at 289–304 shows a compositional bias: acidic residues; it reads EEVECEENDGEEEGES.

Homodimer. Interacts with PIP4K2B; the interaction may regulate localization to the nucleus. Probably interacts with PIP5K1A; the interaction inhibits PIP5K1A kinase activity. Phosphorylated in tyrosines. Phosphorylation is induced by light and increases kinase activity. In terms of tissue distribution, detected in rod photoreceptor cells.

The protein localises to the cell membrane. It is found in the nucleus. It localises to the lysosome. Its subcellular location is the cytoplasm. The protein resides in the photoreceptor inner segment. The protein localises to the cell projection. It is found in the cilium. It localises to the photoreceptor outer segment. The catalysed reaction is a 1,2-diacyl-sn-glycero-3-phospho-(1D-myo-inositol-5-phosphate) + ATP = a 1,2-diacyl-sn-glycero-3-phospho-(1D-myo-inositol-4,5-bisphosphate) + ADP + H(+). It catalyses the reaction 1,2-dihexadecanoyl-sn-glycero-3-phospho-(1D-myo-inositol-5-phosphate) + ATP = 1,2-dihexadecanoyl-sn-glycero-3-phospho-(1D-myo-inositol-4,5-bisphosphate) + ADP + H(+). The enzyme catalyses 1,2-dihexadecanoyl-sn-glycero-3-phospho-(1D-myo-inositol-5-phosphate) + GTP = 1,2-dihexadecanoyl-sn-glycero-3-phospho-(1D-myo-inositol-4,5-bisphosphate) + GDP + H(+). In rod outer segments, activated by light. In terms of biological role, catalyzes the phosphorylation of phosphatidylinositol 5-phosphate (PtdIns5P) on the fourth hydroxyl of the myo-inositol ring, to form phosphatidylinositol 4,5-bisphosphate (PtdIns(4,5)P2). Has both ATP- and GTP-dependent kinase activities. May exert its function by regulating the levels of PtdIns5P, which functions in the cytosol by increasing AKT activity and in the nucleus signals through ING2. May regulate the pool of cytosolic PtdIns5P in response to the activation of tyrosine phosphorylation. Required for lysosome-peroxisome membrane contacts and intracellular cholesterol transport through modulating peroxisomal PtdIns(4,5)P2 level. In collaboration with PIP4K2B, has a role in mediating autophagy in times of nutrient stress. Required for autophagosome-lysosome fusion and the regulation of cellular lipid metabolism. Negatively regulates insulin signaling through a catalytic-independent mechanism. PIP4Ks interact with PIP5Ks and suppress PIP5K-mediated PtdIns(4,5)P2 synthesis and insulin-dependent conversion to PtdIns(3,4,5)P3. May be involved in thrombopoiesis, and the terminal maturation of megakaryocytes and regulation of their size. The chain is Phosphatidylinositol 5-phosphate 4-kinase type-2 alpha from Mus musculus (Mouse).